A 274-amino-acid chain; its full sequence is Exosome complex component RRP40 (274 aa).

Ala-2 bears the N-acetylalanine mark. Lys-150 participates in a covalent cross-link: Glycyl lysine isopeptide (Lys-Gly) (interchain with G-Cter in SUMO2).

Belongs to the RRP40 family. In terms of assembly, component of the RNA exosome core complex (Exo-9), composed of EXOSC1, EXOSC2, EXOSC3, EXOSC4, EXOSC5, EXOSC6, EXOSC7, EXOSC8 and EXOSC9; within the complex interacts with EXOSC5 and EXOSC9. The catalytically inactive RNA exosome core complex (Exo-9) associates with the catalytic subunit EXOSC10/RRP6. Exo-9 may associate with DIS3 to form the nucleolar exosome complex, or DIS3L to form the cytoplasmic exosome complex. Exo-9 is formed by a hexameric base ring consisting of the heterodimers EXOSC4-EXOSC9, EXOSC5-EXOSC8 and EXOSC6-EXOSC7, and a cap ring consisting of EXOSC1, EXOSC2 and EXOSC3. The RNA exosome complex associates with cofactors C1D/RRP47, MPHOSPH6/MPP6 and MTREX/MTR4. Interacts with MPHOSPH6/MPP6; the interaction is direct. Interacts with GTPBP1. Interacts with ZC3HAV1. Interacts with DDX17 only in the presence of ZC3HAV1 in an RNA-independent manner. Interacts with DHX36; this interaction occurs in a RNase-insensitive manner. Interacts with HBS1L isoform 2.

The protein localises to the cytoplasm. The protein resides in the nucleus. It is found in the nucleolus. Functionally, non-catalytic component of the RNA exosome complex which has 3'-&gt;5' exoribonuclease activity and participates in a multitude of cellular RNA processing and degradation events. In the nucleus, the RNA exosome complex is involved in proper maturation of stable RNA species such as rRNA, snRNA and snoRNA, in the elimination of RNA processing by-products and non-coding 'pervasive' transcripts, such as antisense RNA species and promoter-upstream transcripts (PROMPTs), and of mRNAs with processing defects, thereby limiting or excluding their export to the cytoplasm. The RNA exosome may be involved in Ig class switch recombination (CSR) and/or Ig variable region somatic hypermutation (SHM) by targeting AICDA deamination activity to transcribed dsDNA substrates. In the cytoplasm, the RNA exosome complex is involved in general mRNA turnover and specifically degrades inherently unstable mRNAs containing AU-rich elements (AREs) within their 3' untranslated regions, and in RNA surveillance pathways, preventing translation of aberrant mRNAs. It seems to be involved in degradation of histone mRNA. The catalytic inactive RNA exosome core complex of 9 subunits (Exo-9) is proposed to play a pivotal role in the binding and presentation of RNA for ribonucleolysis, and to serve as a scaffold for the association with catalytic subunits and accessory proteins or complexes. EXOSC3 as peripheral part of the Exo-9 complex stabilizes the hexameric ring of RNase PH-domain subunits through contacts with EXOSC9 and EXOSC5. The polypeptide is Exosome complex component RRP40 (Exosc3) (Mus musculus (Mouse)).